The following is a 73-amino-acid chain: MSSSFFKKRLSPIKPGDPIDYKDVDLLKKFITERGKILPRRLTGLTAKQQRDLTNAVKRARIVALLPFVNPEG.

This sequence belongs to the bacterial ribosomal protein bS18 family. Part of the 30S ribosomal subunit. Forms a tight heterodimer with protein bS6.

In terms of biological role, binds as a heterodimer with protein bS6 to the central domain of the 16S rRNA, where it helps stabilize the platform of the 30S subunit. The chain is Small ribosomal subunit protein bS18 from Synechococcus sp. (strain WH7803).